Reading from the N-terminus, the 310-residue chain is Putative methyltransferase mtx subunit H (310 aa).

This sequence belongs to the MtrH family. May be part of a complex composed of 3 subunits; MtxA, MtxH and MtxX.

The chain is Putative methyltransferase mtx subunit H (mtxH) from Methanosarcina barkeri (strain Fusaro / DSM 804).